The chain runs to 466 residues: MASEGDKMLGGRFVGSTDPVMEMLSASITIDQRLAEVDIQGSMAYAKALEKAGILSKSELEKTLSGLEKISEEWSKGVFVVTPTDEDIHTANERRLKELIGDIAGKLHTGRSRNDQVVTDLKLFMKNSLSVISTHLLQLIKTLVERAAIEVDVILPGYTHLQKTQPIRWSQFLLSHAVALTRDSERLGEIKKRINILPLGSGALAGNPLEIDRELLRSELDFASISLNSMDAVRQRDSVVEFLSVAALLMIHLSKMAEDLIIYSTSEFGFLTLSDTYCTGSSVMPQKKNPDSLELIRSKAGRVFGRLAAILMVLKGLPSTYNKDLQEDKEAVFDVVDTLNAVLQVATGVISTLQINKENMEKALSPEILSSDLALYLVHKGMPFRQAHVASGKAVHLAESKGITLNNLSLDDLKSISPLFGSDVSQVFNVVNSVEQYTALGGTAKSSVTAQIEQLRELLKRHKEQA.

Serine 27, asparagine 114, and threonine 159 together coordinate 2-(N(omega)-L-arginino)succinate. Residue histidine 160 is the Proton acceptor of the active site. Serine 281 serves as the catalytic Proton donor. 2-(N(omega)-L-arginino)succinate is bound by residues asparagine 289, tyrosine 321, glutamine 326, and lysine 329.

Belongs to the lyase 1 family. Argininosuccinate lyase subfamily. As to quaternary structure, homotetramer. In terms of processing, the N-terminus is blocked. Eye lens.

It carries out the reaction 2-(N(omega)-L-arginino)succinate = fumarate + L-arginine. It participates in amino-acid biosynthesis; L-arginine biosynthesis; L-arginine from L-ornithine and carbamoyl phosphate: step 3/3. Delta crystallin, the principal crystallin in embryonic lens, is found only in birds and reptiles. This protein also functions as an enzymatically active argininosuccinate lyase, but it has a low activity. The sequence is that of Argininosuccinate lyase (ASL) from Columba livia (Rock dove).